The sequence spans 238 residues: Large ribosomal subunit protein uL2 (238 aa).

The segment at 200–238 is disordered; sequence HGGGLHQSVSRPSTVSRNAPPGRKVGHIAARRTGRKEGK. Polar residues predominate over residues 206–216; sequence QSVSRPSTVSR. Over residues 223 to 238 the composition is skewed to basic residues; it reads KVGHIAARRTGRKEGK.

The protein belongs to the universal ribosomal protein uL2 family. Part of the 50S ribosomal subunit. Forms a bridge to the 30S subunit in the 70S ribosome.

One of the primary rRNA binding proteins. Required for association of the 30S and 50S subunits to form the 70S ribosome, for tRNA binding and peptide bond formation. It has been suggested to have peptidyltransferase activity; this is somewhat controversial. Makes several contacts with the 16S rRNA in the 70S ribosome. The protein is Large ribosomal subunit protein uL2 of Saccharolobus islandicus (strain Y.N.15.51 / Yellowstone #2) (Sulfolobus islandicus).